The following is a 311-amino-acid chain: Delta-1-pyrroline-5-carboxylate reductase kk1I (311 aa).

Positions 1-31 (MTKRESNTLAVLGCGMVFLVSLLDLANRLLG) are cleaved as a signal peptide. N59 is a glycosylation site (N-linked (GlcNAc...) asparagine).

This sequence belongs to the pyrroline-5-carboxylate reductase family.

Its pathway is secondary metabolite biosynthesis. In terms of biological role, delta-1-pyrroline-5-carboxylate reductase; part of the gene cluster that mediates the biosynthesis of KK-1, a novel cyclic depsipeptide with 10 residues which is a promising active compound with high activity against many plant pathogens, especially Botrytis cinerea. Within the pathway, kk1I catalyzes the synthesis of the L-pipecolic acid residue of KK-1 from delta-1-pyrroline-5-carboxylate (P5C), a metabolic intermediate of lysine. The nonribosomal peptide synthetase (NRPS) kk1B catalyzes the elongation and cyclization of the decapeptide chain composed of 1 D-lactic acid residue (D-Lac), 1 pipecolic acid residue (Pip), 1 aspartic acid residue (Asp), 1 isoleucine residue (Ile), 1 glycine residue (Gly), 1 tyrosine residue (Tyr) and 4 valine residues (Val). The Asp, Ile and 3 Val residues are N-methylated by the 5 methyltransferase domains from the NRPS (found in modules 3, 5, 6, 7 and 9), whereas the Tyr residue is O-methylated by the cluster encoded O-methyltransferase kk1A. The thioesterase kk1J is likely to be involved in the corrective mechanism of peptide chain synthesis. The D-lactate dehydrogenase kk1H is involved in the synthesis of D-lactic acid from pyruvic acid, which is recognized by the A domain of the first kk1B module. The pyrroline-5-carboxylate reductase kk1I is involved in the synthesis of the L-pipecolic acid residue of KK-1 from delta-1-pyrroline-5-carboxylate (P5C), a metabolic intermediate of lysine. It still is unclear how kk1C and kk1D are involved in the production of KK-1. The protein is Delta-1-pyrroline-5-carboxylate reductase kk1I of Curvularia clavata.